The following is a 183-amino-acid chain: Ribosome-recycling factor (183 aa).

This sequence belongs to the RRF family.

It is found in the cytoplasm. Responsible for the release of ribosomes from messenger RNA at the termination of protein biosynthesis. May increase the efficiency of translation by recycling ribosomes from one round of translation to another. The polypeptide is Ribosome-recycling factor (Clostridium tetani (strain Massachusetts / E88)).